The chain runs to 391 residues: Ferrochelatase (391 aa).

Residues histidine 196 and glutamate 281 each coordinate Fe cation.

Belongs to the ferrochelatase family.

It is found in the cytoplasm. The enzyme catalyses heme b + 2 H(+) = protoporphyrin IX + Fe(2+). Its pathway is porphyrin-containing compound metabolism; protoheme biosynthesis; protoheme from protoporphyrin-IX: step 1/1. Functionally, catalyzes the ferrous insertion into protoporphyrin IX. The protein is Ferrochelatase of Prochlorococcus marinus subsp. pastoris (strain CCMP1986 / NIES-2087 / MED4).